A 1023-amino-acid chain; its full sequence is NRPS-like oxidoreductase fscA (1023 aa).

The segment at 54–454 (TYGDLNGMAT…NHPFVRQCMV (401 aa)) is adenylation. The 84-residue stretch at 554-637 (PEDDVIGRQI…SIANHVRSAQ (84 aa)) folds into the Carrier domain. Ser596 carries the O-(pantetheine 4'-phosphoryl)serine modification. The Thioester reductase (TE) domain occupies 685–901 (LTGGAGYLGQ…VYDESTTRAR (217 aa)).

Belongs to the NRP synthetase family. Requires pantetheine 4'-phosphate as cofactor.

The protein operates within secondary metabolite biosynthesis. Functionally, NRPS-like oxidoreductasee; part of the fragmented gene cluster that mediates the biosynthesis of fusarochromene, a tryptophan-derived metabolite closely related to a group of mycotoxins including fusarochromanone. Within the pathway, fscA acts as an oxidoreductase that reduces the carboxyl group of 4-hydroxykyrunenine to primary alcohol. The first step of the pathway is the epimerization of L-tryptophan to D-tryptophan in the presence of the NRPS-like tryptophan epimerase fscC. D-tryptophan is subsequently hydroxylated by the tryptophan 6-hydroxylase fscE to yield 6-hydroxytryptophan. The pyrrole ring undergoes cleavaged by the tryptophan 2,3-dioxygenase fscD and is finally converted to 4-hydroxykyrunenine by the hydrolase fscH. The NRPS-like oxidoreductase fscA reduces the carboxyl group to primary alcohol and the DMATS-type prenyltransferase fscG performs prenylation, followed by the formation of a chromene ring catalyzed by the oxidoreductase fscI, which leads to desacetylfusarochromene. Epoxidation by fscF and rearrangement reactions of chromene double bonds convert compound desacetylfusarochromene to fusarochromanones. Although specific acetyltransferases were not found near the fsc gene cluster, several predicted enzymes containing the N-acetyltransferase superfamily domain are present in the genome of F.equiseti. These predicted enzymes may have the potential to convert desacetylfusarochromene to fusarochromene. The chain is NRPS-like oxidoreductase fscA from Fusarium equiseti (Fusarium scirpi).